A 355-amino-acid polypeptide reads, in one-letter code: Tetraacyldisaccharide 4'-kinase (355 aa).

Residue 54–61 coordinates ATP; that stretch reads TVGGAGKT.

Belongs to the LpxK family.

It carries out the reaction a lipid A disaccharide + ATP = a lipid IVA + ADP + H(+). The protein operates within glycolipid biosynthesis; lipid IV(A) biosynthesis; lipid IV(A) from (3R)-3-hydroxytetradecanoyl-[acyl-carrier-protein] and UDP-N-acetyl-alpha-D-glucosamine: step 6/6. Functionally, transfers the gamma-phosphate of ATP to the 4'-position of a tetraacyldisaccharide 1-phosphate intermediate (termed DS-1-P) to form tetraacyldisaccharide 1,4'-bis-phosphate (lipid IVA). This Rhizobium rhizogenes (strain K84 / ATCC BAA-868) (Agrobacterium radiobacter) protein is Tetraacyldisaccharide 4'-kinase.